Reading from the N-terminus, the 368-residue chain is 1-deoxy-D-xylulose 5-phosphate reductoisomerase (368 aa).

Positions 7, 8, 9, 10, 31, 32, 33, and 113 each coordinate NADPH. Residue Lys-114 coordinates 1-deoxy-D-xylulose 5-phosphate. Glu-115 provides a ligand contact to NADPH. Asp-133 contributes to the Mn(2+) binding site. The 1-deoxy-D-xylulose 5-phosphate site is built by Ser-134, Glu-135, Ser-158, and His-181. Residue Glu-135 participates in Mn(2+) binding. Gly-187 is a binding site for NADPH. Residues Ser-194, Asn-199, Lys-200, and Glu-203 each coordinate 1-deoxy-D-xylulose 5-phosphate. Glu-203 provides a ligand contact to Mn(2+).

It belongs to the DXR family. It depends on Mg(2+) as a cofactor. Mn(2+) is required as a cofactor.

The enzyme catalyses 2-C-methyl-D-erythritol 4-phosphate + NADP(+) = 1-deoxy-D-xylulose 5-phosphate + NADPH + H(+). The protein operates within isoprenoid biosynthesis; isopentenyl diphosphate biosynthesis via DXP pathway; isopentenyl diphosphate from 1-deoxy-D-xylulose 5-phosphate: step 1/6. Functionally, catalyzes the NADPH-dependent rearrangement and reduction of 1-deoxy-D-xylulose-5-phosphate (DXP) to 2-C-methyl-D-erythritol 4-phosphate (MEP). The chain is 1-deoxy-D-xylulose 5-phosphate reductoisomerase from Helicobacter pylori (strain J99 / ATCC 700824) (Campylobacter pylori J99).